Here is a 212-residue protein sequence, read N- to C-terminus: ATP-dependent Clp protease proteolytic subunit (212 aa).

S109 serves as the catalytic Nucleophile. H134 is an active-site residue.

Belongs to the peptidase S14 family. In terms of assembly, fourteen ClpP subunits assemble into 2 heptameric rings which stack back to back to give a disk-like structure with a central cavity, resembling the structure of eukaryotic proteasomes.

Its subcellular location is the cytoplasm. It catalyses the reaction Hydrolysis of proteins to small peptides in the presence of ATP and magnesium. alpha-casein is the usual test substrate. In the absence of ATP, only oligopeptides shorter than five residues are hydrolyzed (such as succinyl-Leu-Tyr-|-NHMec, and Leu-Tyr-Leu-|-Tyr-Trp, in which cleavage of the -Tyr-|-Leu- and -Tyr-|-Trp bonds also occurs).. Functionally, cleaves peptides in various proteins in a process that requires ATP hydrolysis. Has a chymotrypsin-like activity. Plays a major role in the degradation of misfolded proteins. The polypeptide is ATP-dependent Clp protease proteolytic subunit (Bdellovibrio bacteriovorus (strain ATCC 15356 / DSM 50701 / NCIMB 9529 / HD100)).